Here is a 495-residue protein sequence, read N- to C-terminus: Thioredoxin reductase SEP1 (495 aa).

Residue 37–54 participates in FAD binding; it reads DFVKPSPPGTTWGLGGTC. Cys54 and Cys59 are joined by a disulfide. His468 acts as the Proton acceptor in catalysis. The segment at residues 493-494 is a cross-link (cysteinyl-selenocysteine (Cys-Sec)); it reads CU. A non-standard amino acid (selenocysteine) is located at residue Sec494.

This sequence belongs to the class-I pyridine nucleotide-disulfide oxidoreductase family. Homodimer. Requires FAD as cofactor. In terms of processing, the N-terminus is blocked.

It catalyses the reaction [thioredoxin]-dithiol + NADP(+) = [thioredoxin]-disulfide + NADPH + H(+). With respect to regulation, activity was very low in selenium-depleted cells, but increased 4-fold to the same level as in selenium-sufficient cells for 70 hours after the addition of 10 nm selenite. This is Thioredoxin reductase SEP1 (SEP1) from Emiliania huxleyi (Coccolithophore).